The chain runs to 333 residues: N-acetyl-gamma-glutamyl-phosphate reductase (333 aa).

Cys-145 is a catalytic residue.

The protein belongs to the NAGSA dehydrogenase family. Type 1 subfamily.

Its subcellular location is the cytoplasm. It carries out the reaction N-acetyl-L-glutamate 5-semialdehyde + phosphate + NADP(+) = N-acetyl-L-glutamyl 5-phosphate + NADPH + H(+). It participates in amino-acid biosynthesis; L-arginine biosynthesis; N(2)-acetyl-L-ornithine from L-glutamate: step 3/4. Catalyzes the NADPH-dependent reduction of N-acetyl-5-glutamyl phosphate to yield N-acetyl-L-glutamate 5-semialdehyde. This is N-acetyl-gamma-glutamyl-phosphate reductase from Salinispora tropica (strain ATCC BAA-916 / DSM 44818 / JCM 13857 / NBRC 105044 / CNB-440).